We begin with the raw amino-acid sequence, 230 residues long: Phosphoribosylformylglycinamidine synthase subunit PurQ (230 aa).

The Glutamine amidotransferase type-1 domain maps to 2-226 (RVAVIVFPGS…LKTWREQNSV (225 aa)). C86 (nucleophile) is an active-site residue. Residues H195 and E197 contribute to the active site.

In terms of assembly, part of the FGAM synthase complex composed of 1 PurL, 1 PurQ and 2 PurS subunits.

Its subcellular location is the cytoplasm. It carries out the reaction N(2)-formyl-N(1)-(5-phospho-beta-D-ribosyl)glycinamide + L-glutamine + ATP + H2O = 2-formamido-N(1)-(5-O-phospho-beta-D-ribosyl)acetamidine + L-glutamate + ADP + phosphate + H(+). The catalysed reaction is L-glutamine + H2O = L-glutamate + NH4(+). Its pathway is purine metabolism; IMP biosynthesis via de novo pathway; 5-amino-1-(5-phospho-D-ribosyl)imidazole from N(2)-formyl-N(1)-(5-phospho-D-ribosyl)glycinamide: step 1/2. Functionally, part of the phosphoribosylformylglycinamidine synthase complex involved in the purines biosynthetic pathway. Catalyzes the ATP-dependent conversion of formylglycinamide ribonucleotide (FGAR) and glutamine to yield formylglycinamidine ribonucleotide (FGAM) and glutamate. The FGAM synthase complex is composed of three subunits. PurQ produces an ammonia molecule by converting glutamine to glutamate. PurL transfers the ammonia molecule to FGAR to form FGAM in an ATP-dependent manner. PurS interacts with PurQ and PurL and is thought to assist in the transfer of the ammonia molecule from PurQ to PurL. In Brevibacillus brevis (strain 47 / JCM 6285 / NBRC 100599), this protein is Phosphoribosylformylglycinamidine synthase subunit PurQ.